Consider the following 606-residue polypeptide: NADH-ubiquinone oxidoreductase chain 5 (606 aa).

15 helical membrane-spanning segments follow: residues 4 to 24, 43 to 63, 87 to 107, 117 to 137, 140 to 160, 171 to 191, 213 to 233, 241 to 261, 272 to 292, 310 to 330, 366 to 386, 413 to 433, 457 to 477, 482 to 502, and 582 to 602; these read FSSL…MMSL, AFIT…ELII, MMFT…SMWY, FFKY…ANNL, LFIG…WWYG, AVLY…WFLT, LIGL…HPWL, TPVS…FLLI, FIQS…AMCA, LGLM…LHIC, MPFT…MPFL, LIAT…ALLG, LLIG…PTTI, MPYY…ILAL, and GLIK…MMLF.

Core subunit of respiratory chain NADH dehydrogenase (Complex I) which is composed of 45 different subunits.

The protein localises to the mitochondrion inner membrane. The catalysed reaction is a ubiquinone + NADH + 5 H(+)(in) = a ubiquinol + NAD(+) + 4 H(+)(out). Functionally, core subunit of the mitochondrial membrane respiratory chain NADH dehydrogenase (Complex I) which catalyzes electron transfer from NADH through the respiratory chain, using ubiquinone as an electron acceptor. Essential for the catalytic activity and assembly of complex I. The protein is NADH-ubiquinone oxidoreductase chain 5 (MT-ND5) of Bos indicus (Zebu).